A 422-amino-acid polypeptide reads, in one-letter code: MAASTNSFLIGNQTQIPSLKPKSISQSFIHFTKPNTINLTTRTKSVSIRCASASTTVGSEQRVINFAAGPAALPENVLLKAQSDLYNWRGSGMSVMEMSHRGKEFLSIIQKAESDLRQLLEIPSEYSVLFLQGGATTQFAALPLNLCKSDDSVDYIVTGSWGDKAFKEAKKYCNPKVIWSGKSEKYTKVPTFDGLEQSSDAKYLHICANETIHGVEFKDYPLVENPDGVLIADMSSNFCSKPVDVSKFGVIYAGAQKNVGPSGVTIVIIRKDLIGNARDITPVMLDYKIHDENSSLYNTPPCFGIYMCGLVFDDLLEQGGLKEVEKKNQRKAELLYNAIDESRGFFRCPVEKSVRSLMNVPFTLEKSELEAEFIKEAAKEKMVQLKGHRSVGGMRASIYNAMPLAGVEKLVAFMKDFQARHA.

A chloroplast-targeting transit peptide spans 1–50; sequence MAASTNSFLIGNQTQIPSLKPKSISQSFIHFTKPNTINLTTRTKSVSIRC. Residue A51 is modified to N-acetylalanine. L-glutamate is bound at residue R101. Pyridoxal 5'-phosphate is bound by residues 135 to 136, W161, T211, D233, and Q256; that span reads AT. Residue K257 is modified to N6-(pyridoxal phosphate)lysine. Pyridoxal 5'-phosphate is bound at residue 298 to 299; sequence NT.

Belongs to the class-V pyridoxal-phosphate-dependent aminotransferase family. SerC subfamily. The cofactor is pyridoxal 5'-phosphate.

The protein localises to the plastid. It is found in the chloroplast. The catalysed reaction is O-phospho-L-serine + 2-oxoglutarate = 3-phosphooxypyruvate + L-glutamate. It catalyses the reaction 4-(phosphooxy)-L-threonine + 2-oxoglutarate = (R)-3-hydroxy-2-oxo-4-phosphooxybutanoate + L-glutamate. Its pathway is amino-acid biosynthesis; L-serine biosynthesis; L-serine from 3-phospho-D-glycerate: step 2/3. Functionally, involved in the plastidial phosphorylated pathway of serine biosynthesis (PPSB). Catalyzes the reversible conversion of 3-phosphohydroxypyruvate to phosphoserine. In Arabidopsis thaliana (Mouse-ear cress), this protein is Phosphoserine aminotransferase 2, chloroplastic (PSAT2).